A 318-amino-acid chain; its full sequence is Guanidinopropionase (318 aa).

Mn(2+) is bound by residues His126, Asp148, His150, Asp152, Asp240, and Asp242.

It belongs to the arginase family. Agmatinase subfamily. Homohexamer. It depends on Mn(2+) as a cofactor.

It carries out the reaction 3-guanidinopropanoate + H2O = urea + beta-alanine. Functionally, catalyzes the hydrolysis of 3-guanidinopropanoate to beta-alanine and urea. Possesses low activity against 4-guanidinobutanoate. Has no activity against arginine and agmatine. This chain is Guanidinopropionase (gpuA), found in Pseudomonas aeruginosa (strain ATCC 15692 / DSM 22644 / CIP 104116 / JCM 14847 / LMG 12228 / 1C / PRS 101 / PAO1).